Here is a 414-residue protein sequence, read N- to C-terminus: ORC1-type DNA replication protein 1 (414 aa).

ATP-binding positions include 70-74 (TGKTA), tyrosine 213, and arginine 225.

This sequence belongs to the CDC6/cdc18 family.

Its function is as follows. Involved in regulation of DNA replication. The polypeptide is ORC1-type DNA replication protein 1 (cdc6-1) (Methanosarcina mazei (strain ATCC BAA-159 / DSM 3647 / Goe1 / Go1 / JCM 11833 / OCM 88) (Methanosarcina frisia)).